The sequence spans 389 residues: ATP phosphoribosyltransferase regulatory subunit (389 aa).

The protein belongs to the class-II aminoacyl-tRNA synthetase family. HisZ subfamily. In terms of assembly, heteromultimer composed of HisG and HisZ subunits.

Its subcellular location is the cytoplasm. It functions in the pathway amino-acid biosynthesis; L-histidine biosynthesis; L-histidine from 5-phospho-alpha-D-ribose 1-diphosphate: step 1/9. Required for the first step of histidine biosynthesis. May allow the feedback regulation of ATP phosphoribosyltransferase activity by histidine. The protein is ATP phosphoribosyltransferase regulatory subunit of Hydrogenovibrio crunogenus (strain DSM 25203 / XCL-2) (Thiomicrospira crunogena).